Reading from the N-terminus, the 455-residue chain is MTTKILPSQPKVGMVSLGCPKALVDSERILTKLRADGYGLSPDYAGADVVLVNTCGFLDSAKEESLEAIGEAMAENGRVIVTGCMGKEADVIRARFPNVLAVTGAHQYEQVVEAVHDAAPPTQGPFVDLVPEGGLKLTPRHYSYLKISEGCNHSCAFCIIPDLRGKLVSRRIDAVLREAEKLVAAGTKELLVISQDTSAYGVDIRHDPRQWHGREIRAHMTDLARELGQLRTSEGRAPWVRLHYVYPYPHVDAVIPLMAEGLLTPYLDIPFQHASPSVLKRMKRPANEAKVLERLKSWRAIAPDIAIRSSFVVGFPGETEADFQYLLDWLEEAQLDRVGAFRFEPVAGAQANALPEPVPDEVKEERYQRIMAKTAAISAAKLEAKIGRTLPVIIDEVGEADEDGSIGATGRSQADAPEIDGHVYLRDVAATLKAGDIVDVEIEDADEHDLFGVVT.

Positions 10 to 120 constitute an MTTase N-terminal domain; sequence PKVGMVSLGC…VVEAVHDAAP (111 aa). The [4Fe-4S] cluster site is built by Cys-19, Cys-55, Cys-84, Cys-151, Cys-155, and Cys-158. Residues 137–380 form the Radical SAM core domain; the sequence is LTPRHYSYLK…MAKTAAISAA (244 aa). A TRAM domain is found at 383-455; that stretch reads EAKIGRTLPV…DEHDLFGVVT (73 aa).

It belongs to the methylthiotransferase family. RimO subfamily. Requires [4Fe-4S] cluster as cofactor.

The protein localises to the cytoplasm. It catalyses the reaction L-aspartate(89)-[ribosomal protein uS12]-hydrogen + (sulfur carrier)-SH + AH2 + 2 S-adenosyl-L-methionine = 3-methylsulfanyl-L-aspartate(89)-[ribosomal protein uS12]-hydrogen + (sulfur carrier)-H + 5'-deoxyadenosine + L-methionine + A + S-adenosyl-L-homocysteine + 2 H(+). Functionally, catalyzes the methylthiolation of an aspartic acid residue of ribosomal protein uS12. This is Ribosomal protein uS12 methylthiotransferase RimO from Sphingopyxis alaskensis (strain DSM 13593 / LMG 18877 / RB2256) (Sphingomonas alaskensis).